Here is a 566-residue protein sequence, read N- to C-terminus: Serine/threonine-protein kinase ppk14 (566 aa).

Positions Met-1 to His-31 are enriched in basic and acidic residues. 2 disordered regions span residues Met-1–Lys-39 and Ser-60–Lys-152. Residues Ala-74–Ser-85 are compositionally biased toward polar residues. The span at Ser-119–Asp-129 shows a compositional bias: basic residues. Positions Arg-134–Ser-145 are enriched in polar residues. The Protein kinase domain occupies Phe-195–Phe-485. Residues Leu-201–Val-209 and Lys-224 contribute to the ATP site. Asp-320 (proton acceptor) is an active-site residue. Phosphothreonine is present on Thr-379. Ser-381 is modified (phosphoserine). The residue at position 385 (Thr-385) is a Phosphothreonine.

It belongs to the protein kinase superfamily. Ser/Thr protein kinase family. KIN82 subfamily.

The catalysed reaction is L-seryl-[protein] + ATP = O-phospho-L-seryl-[protein] + ADP + H(+). It carries out the reaction L-threonyl-[protein] + ATP = O-phospho-L-threonyl-[protein] + ADP + H(+). The sequence is that of Serine/threonine-protein kinase ppk14 (ppk14) from Schizosaccharomyces pombe (strain 972 / ATCC 24843) (Fission yeast).